The sequence spans 621 residues: (-)-beta-phellandrene synthase 1, chloroplastic (621 aa).

Residues 1–49 constitute a chloroplast transit peptide; the sequence is MALALVSVAPLVSMRRSLFSSPYELKSIDKTIPNLVMCRKRMLGRPSIR. Mg(2+)-binding residues include aspartate 372, aspartate 376, and aspartate 524. The short motif at 372-376 is the DDXXD motif element; the sequence is DDIYD.

Belongs to the terpene synthase family. Tpsd subfamily. It depends on Mg(2+) as a cofactor. The cofactor is Mn(2+).

The protein localises to the plastid. Its subcellular location is the chloroplast. It carries out the reaction (2E)-geranyl diphosphate = (-)-beta-phellandrene + diphosphate. It functions in the pathway terpene metabolism; oleoresin biosynthesis. The protein operates within secondary metabolite biosynthesis; terpenoid biosynthesis. In terms of biological role, monoterpene synthase (TPS) involved in the biosynthesis of monoterpene natural products included in conifer oleoresin secretions and volatile emissions; these compounds contribute to biotic and abiotic stress defense against herbivores and pathogens. Catalyzes the conversion of (2E)-geranyl diphosphate (GPP) to (-)-beta-phellandrene. The chain is (-)-beta-phellandrene synthase 1, chloroplastic from Pinus banksiana (Jack pine).